The chain runs to 285 residues: Cytochrome P450 monooxygenase eupD (285 aa).

An N-terminal signal peptide occupies residues Met1–Ala19. Cys229 contacts heme.

Belongs to the cytochrome P450 family. Heme serves as cofactor.

The protein operates within secondary metabolite biosynthesis; terpenoid biosynthesis. Cytochrome P450 monooxygenase; part of the gene cluster that mediates the biosynthesis of eupenifeldin, a bistropolone meroterpenoid that acts as an antitumor agent. The first step of eupenifeldin biosynthesis is the biosynthesis of 3-methylorcinaldehyde performed by the non-reducing polyketide synthase eupA. Oxidative dearomatization of 3-methylorcinaldehyde likely catalyzed by the FAD-dependent monooxygenase eupB is followed by oxidative ring expansion by the 2-oxoglutarate-dependent dioxygenase eupC to provide the first tropolone metabolite, tropolone stipitaldehyde. In parallel, generation of sesquiterpene alpha-humulene from farnesylpyrophosphate (FPP) is catalyzed by the terpene cyclase eupE. The cytochrome P450 monooxygenase eupD then hydroxylates humulene to humulenol. The putative Diels-Alderase eupF probably catalyzes the formation of the tropolone-humulene skeleton by linking humulenol and the polyketide moiety. The short-chain dehydrogenase/reductase eupG and the flavin-dependent monooxygenase eupH are also essential for eupenifeldin biosynthesis and are likely the additional decorating enzymes of the tropolone-humulene skeleton to produce final eupenifeldin or derivatives. This is Cytochrome P450 monooxygenase eupD from Phoma sp.